Here is a 211-residue protein sequence, read N- to C-terminus: Histidine biosynthesis bifunctional protein HisIE (211 aa).

A phosphoribosyl-AMP cyclohydrolase region spans residues 1–107 (MNKLIDFSKG…FNSEIESRFK (107 aa)). The phosphoribosyl-ATP pyrophosphohydrolase stretch occupies residues 108 to 211 (IQALAQTIHQ…KGERKEVREW (104 aa)).

This sequence in the N-terminal section; belongs to the PRA-CH family. The protein in the C-terminal section; belongs to the PRA-PH family.

The protein localises to the cytoplasm. The enzyme catalyses 1-(5-phospho-beta-D-ribosyl)-ATP + H2O = 1-(5-phospho-beta-D-ribosyl)-5'-AMP + diphosphate + H(+). It catalyses the reaction 1-(5-phospho-beta-D-ribosyl)-5'-AMP + H2O = 1-(5-phospho-beta-D-ribosyl)-5-[(5-phospho-beta-D-ribosylamino)methylideneamino]imidazole-4-carboxamide. It functions in the pathway amino-acid biosynthesis; L-histidine biosynthesis; L-histidine from 5-phospho-alpha-D-ribose 1-diphosphate: step 2/9. The protein operates within amino-acid biosynthesis; L-histidine biosynthesis; L-histidine from 5-phospho-alpha-D-ribose 1-diphosphate: step 3/9. This is Histidine biosynthesis bifunctional protein HisIE from Staphylococcus epidermidis (strain ATCC 35984 / DSM 28319 / BCRC 17069 / CCUG 31568 / BM 3577 / RP62A).